We begin with the raw amino-acid sequence, 187 residues long: Large ribosomal subunit protein uL5 (187 aa).

This sequence belongs to the universal ribosomal protein uL5 family. As to quaternary structure, part of the 50S ribosomal subunit; part of the 5S rRNA/L5/L18/L25 subcomplex. Contacts the 5S rRNA and the P site tRNA. Forms a bridge to the 30S subunit in the 70S ribosome.

This is one of the proteins that bind and probably mediate the attachment of the 5S RNA into the large ribosomal subunit, where it forms part of the central protuberance. In the 70S ribosome it contacts protein S13 of the 30S subunit (bridge B1b), connecting the 2 subunits; this bridge is implicated in subunit movement. Contacts the P site tRNA; the 5S rRNA and some of its associated proteins might help stabilize positioning of ribosome-bound tRNAs. The chain is Large ribosomal subunit protein uL5 from Mycobacteroides abscessus (strain ATCC 19977 / DSM 44196 / CCUG 20993 / CIP 104536 / JCM 13569 / NCTC 13031 / TMC 1543 / L948) (Mycobacterium abscessus).